We begin with the raw amino-acid sequence, 457 residues long: uncharacterized protein (457 aa).

12 consecutive transmembrane segments (helical) span residues 18–38 (VMTV…PYLV), 44–64 (GAYV…MILV), 101–121 (MGLL…GWVI), 158–178 (IIFY…KGII), 188–208 (LMPL…TLPG), 228–248 (LFIF…GVLI), 273–293 (IIAV…GIEP), 294–314 (NAGP…LWAG), 316–336 (FFAI…SITI), 355–375 (AIVL…ILGD), 396–416 (SGNI…GFVL), and 433–453 (IKIW…VIFI).

Belongs to the sodium:neurotransmitter symporter (SNF) (TC 2.A.22) family.

The protein localises to the cell membrane. Functionally, putative sodium-dependent transporter. This is an uncharacterized protein from Haemophilus influenzae (strain ATCC 51907 / DSM 11121 / KW20 / Rd).